A 713-amino-acid polypeptide reads, in one-letter code: DNA polymerase eta (713 aa).

Positions 9 to 259 (VALVDMDCFF…MPIRKIRSLG (251 aa)) constitute a UmuC domain. Residues D13 and M14 each coordinate Mg(2+). D13 and M14 together coordinate Mn(2+). R61 is a binding site for a 2'-deoxyribonucleoside 5'-triphosphate. Residues D115 and E116 each contribute to the Mg(2+) site. Residues D115 and E116 each coordinate Mn(2+). Disordered stretches follow at residues 441–472 (TSFL…AVTA) and 495–527 (EASL…QSTG). Composition is skewed to polar residues over residues 456 to 466 (VTSSEAKTQGS) and 497 to 527 (SLSS…QSTG). A UBZ3-type zinc finger spans residues 628-662 (AAEDQVPCEKCGSLVPVWDMPEHMDYHFALELQKS). Zn(2+) is bound by residues C635, C638, H650, and H654. A disordered region spans residues 677 to 705 (VSHQGKRNPKSPLACTNKRPRPEGMQTLE). Residues K682, K686, and K694 each participate in a glycyl lysine isopeptide (Lys-Gly) (interchain with G-Cter in ubiquitin) cross-link. Residues 701–708 (MQTLESFF) carry the PIP-box motif. Residue K709 forms a Glycyl lysine isopeptide (Lys-Gly) (interchain with G-Cter in ubiquitin) linkage.

The protein belongs to the DNA polymerase type-Y family. In terms of assembly, interacts with REV1. Interacts with monoubiquitinated PCNA, but not unmodified PCNA. Interacts with POLI; this interaction targets POLI to the replication machinery. Interacts with PALB2 and BRCA2; the interactions are direct and are required to sustain the recruitment of POLH at blocked replication forks and to stimulate POLH-dependent DNA synthesis on D loop substrates. Interacts (via C-terminus) with TRAIP. Interacts with ubiquitin. Interacts with POLDIP2. The cofactor is Mg(2+). Requires Mn(2+) as cofactor. In terms of processing, monoubiquitinated by RCHY1/PIRH2. Ubiquitination depends on integrity of the UBZ3-type zinc finger domain and is enhanced by TRAIP. Ubiquitination inhibits the ability of PolH to interact with PCNA and to bypass UV-induced lesions.

It localises to the nucleus. It carries out the reaction DNA(n) + a 2'-deoxyribonucleoside 5'-triphosphate = DNA(n+1) + diphosphate. Its activity is regulated as follows. The enzyme in complex with the DNA substrate binds a third divalent metal cation. The binding of this third divalent cation, which is coordinated by water molecules and two oxygen atoms from DNA and dNTP, is essential for catalyzing the DNA synthesis. Its function is as follows. DNA polymerase specifically involved in the DNA repair by translesion synthesis (TLS). Due to low processivity on both damaged and normal DNA, cooperates with the heterotetrameric (REV3L, REV7, POLD2 and POLD3) POLZ complex for complete bypass of DNA lesions. Inserts one or 2 nucleotide(s) opposite the lesion, the primer is further extended by the tetrameric POLZ complex. In the case of 1,2-intrastrand d(GpG)-cisplatin cross-link, inserts dCTP opposite the 3' guanine. Particularly important for the repair of UV-induced pyrimidine dimers. Although inserts the correct base, may cause base transitions and transversions depending upon the context. May play a role in hypermutation at immunoglobulin genes. Forms a Schiff base with 5'-deoxyribose phosphate at abasic sites, but does not have any lyase activity, preventing the release of the 5'-deoxyribose phosphate (5'-dRP) residue. This covalent trapping of the enzyme by the 5'-dRP residue inhibits its DNA synthetic activity during base excision repair, thereby avoiding high incidence of mutagenesis. Targets POLI to replication foci. This is DNA polymerase eta (POLH) from Homo sapiens (Human).